A 171-amino-acid polypeptide reads, in one-letter code: MEHSRFLSGLILAAFLSRVSPYEVEMEELEDKVFVSCNTSIIWLQGTEGELLSDKKIDLGKRILDPRGLYKCNAPKEQDSNSKIFLQVYYRMCQNCVELDSATLAGIIVTDIIATLLLALGVYCFAGHEMGRFSRAADTQDLLRNDQLYQPLRDRNDGQYSRLGENWARNK.

The first 21 residues, 1–21, serve as a signal peptide directing secretion; it reads MEHSRFLSGLILAAFLSRVSP. The Extracellular segment spans residues 22 to 104; that stretch reads YEVEMEELED…NCVELDSATL (83 aa). Cys-37 and Cys-72 are joined by a disulfide. Asn-38 carries an N-linked (GlcNAc...) asparagine glycan. Residues 105 to 125 traverse the membrane as a helical segment; sequence AGIIVTDIIATLLLALGVYCF. Residues 126 to 171 lie on the Cytoplasmic side of the membrane; the sequence is AGHEMGRFSRAADTQDLLRNDQLYQPLRDRNDGQYSRLGENWARNK. The ITAM domain occupies 138 to 166; sequence DTQDLLRNDQLYQPLRDRNDGQYSRLGEN. Tyr-149 and Tyr-160 each carry phosphotyrosine.

The TCR-CD3 complex is composed of a CD3D/CD3E and a CD3G/CD3E heterodimers that preferentially associate with TCRalpha and TCRbeta, respectively, to form TCRalpha/CD3E/CD3G and TCRbeta/CD3G/CD3E trimers. In turn, the hexamer interacts with CD3Z homodimer to form the TCR-CD3 complex. Alternatively, TCRalpha and TCRbeta can be replaced by TCRgamma and TCRdelta. Interacts with coreceptors CD4 and CD8. Phosphorylated on Tyr residues after T-cell receptor triggering by LCK in association with CD4/CD8. In terms of tissue distribution, CD3D is mostly present on T-lymphocytes with its TCR-CD3 partners. Present also in fetal NK-cells.

The protein localises to the cell membrane. Its function is as follows. Part of the TCR-CD3 complex present on T-lymphocyte cell surface that plays an essential role in adaptive immune response. When antigen presenting cells (APCs) activate T-cell receptor (TCR), TCR-mediated signals are transmitted across the cell membrane by the CD3 chains CD3D, CD3E, CD3G and CD3Z. All CD3 chains contain immunoreceptor tyrosine-based activation motifs (ITAMs) in their cytoplasmic domain. Upon TCR engagement, these motifs become phosphorylated by Src family protein tyrosine kinases LCK and FYN, resulting in the activation of downstream signaling pathways. In addition of this role of signal transduction in T-cell activation, CD3D plays an essential role in thymocyte differentiation. Indeed, participates in correct intracellular TCR-CD3 complex assembly and surface expression. In absence of a functional TCR-CD3 complex, thymocytes are unable to differentiate properly. Interacts with CD4 and CD8 and thus serves to establish a functional link between the TCR and coreceptors CD4 and CD8, which is needed for activation and positive selection of CD4 or CD8 T-cells. The sequence is that of T-cell surface glycoprotein CD3 delta chain (CD3D) from Sus scrofa (Pig).